The primary structure comprises 275 residues: Beta-lactamase OXA-15 (275 aa).

An N-terminal signal peptide occupies residues 1-21 (MAIRIFAILFSIFSLATFAHA). Ser-72 acts as the Acyl-ester intermediate in catalysis. Lys-75 bears the N6-carboxylysine mark. A substrate-binding site is contributed by 210 to 212 (KTG).

Belongs to the class-D beta-lactamase family.

The catalysed reaction is a beta-lactam + H2O = a substituted beta-amino acid. Functionally, hydrolyzes oxacillin, first-generation cephalosporins and ceftazidime. Does not hydrolyze cefotaxime or carbapenems. The polypeptide is Beta-lactamase OXA-15 (bla) (Pseudomonas aeruginosa).